The primary structure comprises 201 residues: ATP synthase subunit delta (201 aa).

It belongs to the ATPase delta chain family. As to quaternary structure, F-type ATPases have 2 components, F(1) - the catalytic core - and F(0) - the membrane proton channel. F(1) has five subunits: alpha(3), beta(3), gamma(1), delta(1), epsilon(1). F(0) has three main subunits: a(1), b(2) and c(10-14). The alpha and beta chains form an alternating ring which encloses part of the gamma chain. F(1) is attached to F(0) by a central stalk formed by the gamma and epsilon chains, while a peripheral stalk is formed by the delta and b chains.

Its subcellular location is the cell inner membrane. F(1)F(0) ATP synthase produces ATP from ADP in the presence of a proton or sodium gradient. F-type ATPases consist of two structural domains, F(1) containing the extramembraneous catalytic core and F(0) containing the membrane proton channel, linked together by a central stalk and a peripheral stalk. During catalysis, ATP synthesis in the catalytic domain of F(1) is coupled via a rotary mechanism of the central stalk subunits to proton translocation. Its function is as follows. This protein is part of the stalk that links CF(0) to CF(1). It either transmits conformational changes from CF(0) to CF(1) or is implicated in proton conduction. The protein is ATP synthase subunit delta of Xanthobacter autotrophicus (strain ATCC BAA-1158 / Py2).